The following is a 328-amino-acid chain: Small ribosomal subunit protein bS1A (328 aa).

S1 motif domains follow at residues 31 to 100 (GDIV…LSIR), 118 to 182 (DATV…LSHR), and 196 to 264 (AQVV…LSTK). Positions 298–328 (EAQGIPYEPPTSVDDTDDEEDESLAVSAVDE) are disordered. Over residues 311–328 (DDTDDEEDESLAVSAVDE) the composition is skewed to acidic residues.

Belongs to the bacterial ribosomal protein bS1 family.

Binds mRNA. This is Small ribosomal subunit protein bS1A (rps1A) from Synechocystis sp. (strain ATCC 27184 / PCC 6803 / Kazusa).